A 174-amino-acid polypeptide reads, in one-letter code: Mating-type protein ALPHA2 (174 aa).

The homeobox; TALE-type DNA-binding region spans 108-170; the sequence is QPYRGHRFTK…NRRRKQKHPP (63 aa).

The protein belongs to the TALE/M-ATYP homeobox family. In terms of assembly, forms a heterodimer with A1.

It is found in the nucleus. Its function is as follows. Mating type proteins are sequence specific DNA-binding proteins that act as master switches in yeast differentiation by controlling gene expression in a cell type-specific fashion. Transcriptional corepressor that acts in conjunction with A1 to repress transcription of haploid-specific genes and of MATALPHA1. This chain is Mating-type protein ALPHA2 (MATALPHA2), found in Nakaseomyces delphensis (Yeast).